The primary structure comprises 213 residues: Major fimbrial subunit (213 aa).

Residues 1 to 20 form the signal peptide; it reads MKKTLLGSLILLAFAGNVQA. Cysteine 41 and cysteine 81 form a disulfide bridge.

It belongs to the fimbrial protein family.

It is found in the fimbrium. Mediates adherence to oropharyngeal epithelial cells. Helps the airway colonization process. This chain is Major fimbrial subunit (hifA), found in Haemophilus influenzae.